A 948-amino-acid polypeptide reads, in one-letter code: Glycine dehydrogenase (decarboxylating) (948 aa).

Lys-696 is modified (N6-(pyridoxal phosphate)lysine).

This sequence belongs to the GcvP family. As to quaternary structure, the glycine cleavage system is composed of four proteins: P, T, L and H. Pyridoxal 5'-phosphate serves as cofactor.

The enzyme catalyses N(6)-[(R)-lipoyl]-L-lysyl-[glycine-cleavage complex H protein] + glycine + H(+) = N(6)-[(R)-S(8)-aminomethyldihydrolipoyl]-L-lysyl-[glycine-cleavage complex H protein] + CO2. In terms of biological role, the glycine cleavage system catalyzes the degradation of glycine. The P protein binds the alpha-amino group of glycine through its pyridoxal phosphate cofactor; CO(2) is released and the remaining methylamine moiety is then transferred to the lipoamide cofactor of the H protein. This is Glycine dehydrogenase (decarboxylating) from Akkermansia muciniphila (strain ATCC BAA-835 / DSM 22959 / JCM 33894 / BCRC 81048 / CCUG 64013 / CIP 107961 / Muc).